A 134-amino-acid chain; its full sequence is Large ribosomal subunit protein uL16c (134 aa).

Residues 1 to 22 (MLSPKRTRFRKQHRGRMKGISH) are disordered.

It belongs to the universal ribosomal protein uL16 family. Part of the 50S ribosomal subunit.

It is found in the plastid. The protein resides in the chloroplast. This is Large ribosomal subunit protein uL16c from Nicotiana tomentosiformis (Tobacco).